A 314-amino-acid polypeptide reads, in one-letter code: MSGLTVVFAGTPEFGLSCLDALIQSRHHLKAVYTQPDRPAGRGRKLQESPVKEWAINNQVPVYQPLNFKNQEAIDELSALKPDVMVVIAYGLILPKAVLEIPRLGCINVHASLLPRWRGASPIQHAILHGDAESGVTIMQMDVGLDTGPMLCKATCPVTSSDTAGSLHDKLAKMSVKPLLDVLEALASNSAQFELQNNELATYAGKINKEEARINWHQSAVEIDRKIRAFNPWPVAYTLAEELMLRIHQAKATDIMSTEMPGMVLNIDKNGMLVATNDNALLVEKIQFPGAKVISVRDWLNSGKTQLHTGLMLQ.

A (6S)-5,6,7,8-tetrahydrofolate-binding site is contributed by 112–115 (SLLP).

Belongs to the Fmt family.

It carries out the reaction L-methionyl-tRNA(fMet) + (6R)-10-formyltetrahydrofolate = N-formyl-L-methionyl-tRNA(fMet) + (6S)-5,6,7,8-tetrahydrofolate + H(+). Attaches a formyl group to the free amino group of methionyl-tRNA(fMet). The formyl group appears to play a dual role in the initiator identity of N-formylmethionyl-tRNA by promoting its recognition by IF2 and preventing the misappropriation of this tRNA by the elongation apparatus. This is Methionyl-tRNA formyltransferase from Legionella pneumophila (strain Corby).